The following is a 423-amino-acid chain: Phosphoribosylamine--glycine ligase (423 aa).

The region spanning 107–312 is the ATP-grasp domain; sequence KDLCARYGIP…LLPLLYAAAT (206 aa). 133-193 provides a ligand contact to ATP; the sequence is IREEGAPIVI…EAYLDGEEAS (61 aa). Mg(2+)-binding residues include E282 and N284.

Belongs to the GARS family. Mg(2+) serves as cofactor. It depends on Mn(2+) as a cofactor.

The enzyme catalyses 5-phospho-beta-D-ribosylamine + glycine + ATP = N(1)-(5-phospho-beta-D-ribosyl)glycinamide + ADP + phosphate + H(+). It participates in purine metabolism; IMP biosynthesis via de novo pathway; N(1)-(5-phospho-D-ribosyl)glycinamide from 5-phospho-alpha-D-ribose 1-diphosphate: step 2/2. The polypeptide is Phosphoribosylamine--glycine ligase (Rhizobium meliloti (strain 1021) (Ensifer meliloti)).